A 420-amino-acid chain; its full sequence is UDP-glucuronic acid decarboxylase 1 (420 aa).

The residue at position 1 (methionine 1) is an N-acetylmethionine. Residues 1–19 are Cytoplasmic-facing; the sequence is MVSKALLRLVSAVNRRRMK. The helical; Signal-anchor for type II membrane protein transmembrane segment at 20–40 threads the bilayer; sequence LLLGIALLAYVASVWGNFVNM. The Lumenal segment spans residues 41 to 420; the sequence is RSIQENGELK…RIKKGRTRHN (380 aa). Phosphothreonine is present on threonine 94. Positions 98, 99, 100, 119, 120, 122, 123, 124, 144, and 145 each coordinate NAD(+). UDP-alpha-D-glucuronate-binding residues include leucine 149 and tyrosine 150. NAD(+)-binding residues include leucine 159 and serine 161. Residue lysine 177 participates in UDP-alpha-D-glucuronate binding. Residue threonine 178 participates in NAD(+) binding. Residues asparagine 185, glycine 188, lysine 191, and arginine 192 each contribute to the UDP-alpha-D-glucuronate site. The NAD(+) site is built by alanine 200, tyrosine 231, and lysine 235. The Proton acceptor role is filled by tyrosine 231. Tyrosine 245, glutamine 248, and glutamate 249 together coordinate UDP-alpha-D-glucuronate. The NAD(+) site is built by threonine 261, histidine 267, and arginine 272. N-linked (GlcNAc...) asparagine glycosylation is present at asparagine 316.

It belongs to the NAD(P)-dependent epimerase/dehydratase family. UDP-glucuronic acid decarboxylase subfamily. As to quaternary structure, homodimer and homotetramer. Interacts with AKT1. NAD(+) is required as a cofactor.

Its subcellular location is the golgi apparatus. The protein localises to the golgi stack membrane. The enzyme catalyses UDP-alpha-D-glucuronate + H(+) = UDP-alpha-D-xylose + CO2. Its pathway is nucleotide-sugar biosynthesis; UDP-alpha-D-xylose biosynthesis; UDP-alpha-D-xylose from UDP-alpha-D-glucuronate: step 1/1. In terms of biological role, catalyzes the NAD-dependent decarboxylation of UDP-glucuronic acid to UDP-xylose. Necessary for the biosynthesis of the core tetrasaccharide in glycosaminoglycan biosynthesis. This is UDP-glucuronic acid decarboxylase 1 (UXS1) from Pongo abelii (Sumatran orangutan).